We begin with the raw amino-acid sequence, 316 residues long: Ribosomal RNA small subunit methyltransferase H (316 aa).

S-adenosyl-L-methionine-binding positions include 32 to 34 (AGH), Asp52, Phe79, Asp100, and Gln107.

This sequence belongs to the methyltransferase superfamily. RsmH family.

The protein resides in the cytoplasm. The catalysed reaction is cytidine(1402) in 16S rRNA + S-adenosyl-L-methionine = N(4)-methylcytidine(1402) in 16S rRNA + S-adenosyl-L-homocysteine + H(+). Its function is as follows. Specifically methylates the N4 position of cytidine in position 1402 (C1402) of 16S rRNA. In Lysinibacillus sphaericus (strain C3-41), this protein is Ribosomal RNA small subunit methyltransferase H.